Reading from the N-terminus, the 321-residue chain is Cysteine and histidine-rich domain-containing protein 1 (321 aa).

16 residues coordinate Zn(2+): C9, C14, C28, H31, C46, C47, C63, H68, C152, C157, C170, H173, C188, C189, C205, and H210. 2 consecutive CHORD domains span residues 9–68 and 152–210; these read CYHK…RGKH and CRNN…SGEH. One can recognise a CS domain in the interval 218-308; it reads VSKFREDWFS…KHGTGWPRLK (91 aa).

Functionally, regulates centrosome duplication. Controls the secretion of the tyrosine kinase receptor let-23/EGFR from the endoplasmic reticulum and is required for the localization of let-23/EGFR to the plasma membrane of vulval precursor cells. It thus plays a role in positively regulating let/EGFR signaling, and anchor cell and vulval precursor cell alignment. Plays a role in vulval development and morphogenesis. This Caenorhabditis elegans protein is Cysteine and histidine-rich domain-containing protein 1.